The primary structure comprises 395 residues: Phosphopentomutase (395 aa).

Residues aspartate 14, aspartate 286, histidine 291, aspartate 327, histidine 328, and histidine 339 each contribute to the Mn(2+) site.

It belongs to the phosphopentomutase family. Mn(2+) is required as a cofactor.

It localises to the cytoplasm. The enzyme catalyses 2-deoxy-alpha-D-ribose 1-phosphate = 2-deoxy-D-ribose 5-phosphate. The catalysed reaction is alpha-D-ribose 1-phosphate = D-ribose 5-phosphate. It participates in carbohydrate degradation; 2-deoxy-D-ribose 1-phosphate degradation; D-glyceraldehyde 3-phosphate and acetaldehyde from 2-deoxy-alpha-D-ribose 1-phosphate: step 1/2. Its function is as follows. Isomerase that catalyzes the conversion of deoxy-ribose 1-phosphate (dRib-1-P) and ribose 1-phosphate (Rib-1-P) to deoxy-ribose 5-phosphate (dRib-5-P) and ribose 5-phosphate (Rib-5-P), respectively. The chain is Phosphopentomutase from Staphylococcus haemolyticus (strain JCSC1435).